We begin with the raw amino-acid sequence, 603 residues long: Penicillin-binding protein activator LpoA (603 aa).

The signal sequence occupies residues 1–24 (MINHKRLSVPRILTPVALAITLAA). A lipid anchor (N-palmitoyl cysteine) is attached at cysteine 25. The S-diacylglycerol cysteine moiety is linked to residue cysteine 25.

It belongs to the LpoA family. In terms of assembly, interacts with PBP1a.

The protein resides in the cell outer membrane. In terms of biological role, regulator of peptidoglycan synthesis that is essential for the function of penicillin-binding protein 1A (PBP1a). This is Penicillin-binding protein activator LpoA from Vibrio antiquarius (strain Ex25).